The primary structure comprises 769 residues: Neutral alpha-glucosidase C (769 aa).

The active-site Nucleophile is Asp366. Residue Glu369 is part of the active site. The Proton donor role is filled by Asp442.

The protein belongs to the glycosyl hydrolase 31 family.

It carries out the reaction Hydrolysis of terminal, non-reducing (1-&gt;4)-linked alpha-D-glucose residues with release of alpha-D-glucose.. In terms of biological role, has alpha-glucosidase activity. The polypeptide is Neutral alpha-glucosidase C (GANC) (Macaca fascicularis (Crab-eating macaque)).